A 419-amino-acid polypeptide reads, in one-letter code: Transcription termination factor Rho (419 aa).

One can recognise a Rho RNA-BD domain in the interval 48–123; sequence DIFGDGVLEI…LKVNKVNYDK (76 aa). RNA-binding stretches follow at residues 61-66, 78-80, and 108-110; these read GFGFLR, DIY, and ERY. Residues 169-174, 181-186, and arginine 212 each bind ATP; these read GRGQRG and KAGKTM. Positions 284–288 are RNA-binding 2; it reads VLTGG.

The protein belongs to the Rho family. Homohexamer. The homohexamer assembles into an open ring structure.

Its function is as follows. Facilitates transcription termination by a mechanism that involves Rho binding to the nascent RNA, activation of Rho's RNA-dependent ATPase activity, and release of the mRNA from the DNA template. The polypeptide is Transcription termination factor Rho (Buchnera aphidicola subsp. Baizongia pistaciae (strain Bp)).